Here is a 280-residue protein sequence, read N- to C-terminus: Shikimate dehydrogenase (NADP(+)) (280 aa).

Shikimate is bound by residues 15–17 (SLS) and Thr-62. Lys-66 serves as the catalytic Proton acceptor. Shikimate-binding residues include Asn-88 and Asp-104. NADP(+) is bound by residues 128 to 132 (GAGGA), 151 to 156 (NRTEER), and Ile-222. Tyr-224 contacts shikimate. Gly-245 is a binding site for NADP(+).

This sequence belongs to the shikimate dehydrogenase family. As to quaternary structure, homodimer.

It catalyses the reaction shikimate + NADP(+) = 3-dehydroshikimate + NADPH + H(+). It functions in the pathway metabolic intermediate biosynthesis; chorismate biosynthesis; chorismate from D-erythrose 4-phosphate and phosphoenolpyruvate: step 4/7. In terms of biological role, involved in the biosynthesis of the chorismate, which leads to the biosynthesis of aromatic amino acids. Catalyzes the reversible NADPH linked reduction of 3-dehydroshikimate (DHSA) to yield shikimate (SA). The protein is Shikimate dehydrogenase (NADP(+)) of Methanosarcina acetivorans (strain ATCC 35395 / DSM 2834 / JCM 12185 / C2A).